The chain runs to 495 residues: IQ domain-containing protein IQM5 (495 aa).

A disordered region spans residues 89–122; sequence ENRGGEEEDERGSSPKRRNRGNLTALSLPAPTPF. The 30-residue stretch at 131-160 folds into the IQ domain; the sequence is LDAAAVTLQKVYKSYRTRRNLADCAVVVEE.

As to expression, expressed in roots, rosette and cauline leaves, and at lower levels in stems, flowers and siliques.

Its subcellular location is the cytoplasm. It localises to the nucleus. May be involved in biotic and abiotic stress responses. The polypeptide is IQ domain-containing protein IQM5 (Arabidopsis thaliana (Mouse-ear cress)).